The chain runs to 215 residues: Protein Thf1 (215 aa).

Residues 182–213 are a coiled coil; the sequence is ERMDQAVELVEETIAAEKRKKERRLEEQAQRT.

This sequence belongs to the THF1 family.

In terms of biological role, may be involved in photosynthetic membrane biogenesis. This is Protein Thf1 from Synechococcus sp. (strain CC9605).